A 481-amino-acid chain; its full sequence is Zinc metalloproteinase/disintegrin (481 aa).

A signal peptide spans 1-20 (MIEVLLVTICLAVFPYQGSS). A propeptide spanning residues 21-189 (IILESGNVND…KKASQLYLTP (169 aa)) is cleaved from the precursor. At Glu-190 the chain carries Pyrrolidone carboxylic acid (Glu). The Peptidase M12B domain maps to 197–392 (RYIKLAIVVD…DNPQCILNAP (196 aa)). 296 to 299 (RNTI) contacts an L-amino acid tripeptide. 3 disulfide bridges follow: Cys-308/Cys-387, Cys-349/Cys-371, and Cys-351/Cys-354. Zn(2+) is bound at residue His-333. Residue Glu-334 is part of the active site. The Zn(2+) site is built by His-337 and His-343. Ser-357 provides a ligand contact to an L-amino acid tripeptide. A propeptide spanning residues 393–410 (LRTDTVSTPVSGNEFLEA) is cleaved from the precursor. The Disintegrin domain maps to 400 to 481 (TPVSGNEFLE…ADCPRNGLYG (82 aa)). Intrachain disulfides connect Cys-414–Cys-429, Cys-416–Cys-424, Cys-423–Cys-446, Cys-437–Cys-443, Cys-442–Cys-467, and Cys-455–Cys-474. Residues 459-461 (RGD) carry the Cell attachment site motif.

It belongs to the venom metalloproteinase (M12B) family. P-II subfamily. P-IIa sub-subfamily. Monomer. Zn(2+) serves as cofactor. Post-translationally, the N-terminus is blocked. In terms of tissue distribution, expressed by the venom gland.

The protein localises to the secreted. Its activity is regulated as follows. Inhibited by EDTA and 1,10-phenanthroline. Is also inhibited by endogenous tripeptide inhibitors pyroGlu-Asn-Trp, pyroGlu-Gln-Trp, and pyroGlu-Lys-Trp. Functionally, potent fibrinogenolytic protease which cleaves mainly the Aalpha chain of fibrinogen (FGA) and slightly the Bbeta (FGB) and the gamma (FGG) chains. May possess hemorrhagic activity. Compared to other SVMP, the substrate-binding pocket is relatively shallow. Is less susceptible to tripeptide inhibitors than TM-1 (AC U3KRG1) and TM-2. Its function is as follows. Inhibits platelet aggregation induced by ADP, thrombin, platelet-activating factor and collagen. Acts by inhibiting fibrinogen interaction with platelet receptors GPIIb/GPIIIa (ITGA2B/ITGB3). In Protobothrops mucrosquamatus (Taiwan habu), this protein is Zinc metalloproteinase/disintegrin.